We begin with the raw amino-acid sequence, 155 residues long: uncharacterized protein (155 aa).

The helical transmembrane segment at 5–25 threads the bilayer; it reads GIIICVGIAFLIFIFLWAYFK.

The protein localises to the membrane. This is an uncharacterized protein from Acheta domesticus (House cricket).